A 520-amino-acid polypeptide reads, in one-letter code: Maturase K (520 aa).

This sequence belongs to the intron maturase 2 family. MatK subfamily.

It localises to the plastid. Its subcellular location is the chloroplast. Its function is as follows. Usually encoded in the trnK tRNA gene intron. Probably assists in splicing its own and other chloroplast group II introns. The protein is Maturase K of Beaucarnea recurvata (Elephant-foot tree).